An 826-amino-acid chain; its full sequence is Beta-galactosidase 7 (826 aa).

A signal peptide spans 1-25 (MKMKHFTRLLSLFFILITSLSLAKS). N154 carries an N-linked (GlcNAc...) asparagine glycan. E184 acts as the Proton donor in catalysis. E253 acts as the Nucleophile in catalysis. N-linked (GlcNAc...) asparagine glycosylation is found at N254, N351, N380, N491, N665, N706, N797, and N801. The SUEL-type lectin domain occupies 740 to 826 (AHEHNKVELS…PKKLAVELEC (87 aa)).

This sequence belongs to the glycosyl hydrolase 35 family. Expressed in flowers.

It localises to the secreted. The protein localises to the extracellular space. It is found in the apoplast. The catalysed reaction is Hydrolysis of terminal non-reducing beta-D-galactose residues in beta-D-galactosides.. The chain is Beta-galactosidase 7 (BGAL7) from Arabidopsis thaliana (Mouse-ear cress).